The following is a 124-amino-acid chain: PEP-dependent dihydroxyacetone kinase 1, phosphoryl donor subunit DhaM (124 aa).

A PTS EIIA type-4 domain is found at 4–124 (PYGVVIISHS…AANLKTIEIK (121 aa)). Residue histidine 12 is the Tele-phosphohistidine intermediate of the active site.

This sequence belongs to the PEP-utilizing enzyme family. Homodimer. The dihydroxyacetone kinase complex is composed of a homodimer of DhaM, a homodimer of DhaK and the subunit DhaL.

It is found in the cytoplasm. It carries out the reaction dihydroxyacetone + phosphoenolpyruvate = dihydroxyacetone phosphate + pyruvate. Its function is as follows. Component of the dihydroxyacetone kinase complex, which is responsible for the phosphoenolpyruvate (PEP)-dependent phosphorylation of dihydroxyacetone. DhaM serves as the phosphoryl donor. Is phosphorylated by phosphoenolpyruvate in an EI- and HPr-dependent reaction, and a phosphorelay system on histidine residues finally leads to phosphoryl transfer to DhaL and dihydroxyacetone. The polypeptide is PEP-dependent dihydroxyacetone kinase 1, phosphoryl donor subunit DhaM (Listeria innocua serovar 6a (strain ATCC BAA-680 / CLIP 11262)).